The primary structure comprises 129 residues: Histone H2A-IV (129 aa).

Belongs to the histone H2A family. The nucleosome is a histone octamer containing two molecules each of H2A, H2B, H3 and H4 assembled in one H3-H4 heterotetramer and two H2A-H2B heterodimers. The octamer wraps approximately 147 bp of DNA.

It is found in the nucleus. Its subcellular location is the chromosome. Core component of nucleosome. Nucleosomes wrap and compact DNA into chromatin, limiting DNA accessibility to the cellular machineries which require DNA as a template. Histones thereby play a central role in transcription regulation, DNA repair, DNA replication and chromosomal stability. DNA accessibility is regulated via a complex set of post-translational modifications of histones, also called histone code, and nucleosome remodeling. This Volvox carteri (Green alga) protein is Histone H2A-IV.